The chain runs to 436 residues: ABC transporter permease YtrF (436 aa).

Positions methionine 1 to alanine 31 are cleaved as a signal peptide. A lipid anchor (N-palmitoyl cysteine) is attached at cysteine 32. Cysteine 32 is lipidated: S-diacylglycerol cysteine. Residues asparagine 115–lysine 165 are a coiled coil. A run of 3 helical transmembrane segments spans residues phenylalanine 293–phenylalanine 313, tyrosine 350–valine 370, and isoleucine 396–glycine 416.

It belongs to the ABC-4 integral membrane protein family. In terms of assembly, the complex is composed of 2 ATP-binding proteins (YtrB and YtrE), 2 transmembrane proteins (YtrC and YtrD) and a solute-binding protein (YtrF).

It is found in the cell membrane. Part of the ABC transporter complex YtrBCDEF that plays a role in acetoin utilization during stationary phase and sporulation. This Bacillus subtilis (strain 168) protein is ABC transporter permease YtrF (ytrF).